The sequence spans 169 residues: MSDNTLYLRREKRFLVLLGIICLALIGGALYMQIVLGEAPCPLCILQRYALLFIAIFAFIGAAMSGRRGVTVCETLVTLSALGGIAAAGRHVWILAHPSDSCGIDVLQPIVDGLPLATLFPTGFQVSGFCTTPYPPVLGLSLAQWALAAFVLTAVLVPACIIRNRRKPY.

Residues 1–14 are Cytoplasmic-facing; the sequence is MSDNTLYLRREKRF. Residues 15 to 31 form a helical membrane-spanning segment; the sequence is LVLLGIICLALIGGALY. Over 32-49 the chain is Periplasmic; sequence MQIVLGEAPCPLCILQRY. The cysteines at positions 41 and 44 are disulfide-linked. A helical membrane pass occupies residues 50 to 64; that stretch reads ALLFIAIFAFIGAAM. The Cytoplasmic portion of the chain corresponds to 65 to 71; the sequence is SGRRGVT. Residues 72–89 traverse the membrane as a helical segment; the sequence is VCETLVTLSALGGIAAAG. At 90–144 the chain is on the periplasmic side; it reads RHVWILAHPSDSCGIDVLQPIVDGLPLATLFPTGFQVSGFCTTPYPPVLGLSLAQ. Cys-102 and Cys-130 are oxidised to a cystine. Residues 145–163 form a helical membrane-spanning segment; sequence WALAAFVLTAVLVPACIIR. At 164–169 the chain is on the cytoplasmic side; the sequence is NRRKPY.

It belongs to the DsbB family.

The protein resides in the cell inner membrane. Its function is as follows. Required for disulfide bond formation in some periplasmic proteins. Acts by oxidizing the DsbA protein. This is Disulfide bond formation protein B 1 from Pseudomonas savastanoi pv. phaseolicola (strain 1448A / Race 6) (Pseudomonas syringae pv. phaseolicola (strain 1448A / Race 6)).